The sequence spans 432 residues: Enolase (432 aa).

Gln-164 serves as a coordination point for (2R)-2-phosphoglycerate. Glu-206 acts as the Proton donor in catalysis. Mg(2+)-binding residues include Asp-243, Glu-284, and Asp-311. The (2R)-2-phosphoglycerate site is built by Lys-336, Arg-365, Ser-366, and Lys-387. The Proton acceptor role is filled by Lys-336.

The protein belongs to the enolase family. It depends on Mg(2+) as a cofactor.

The protein localises to the cytoplasm. Its subcellular location is the secreted. It localises to the cell surface. The catalysed reaction is (2R)-2-phosphoglycerate = phosphoenolpyruvate + H2O. The protein operates within carbohydrate degradation; glycolysis; pyruvate from D-glyceraldehyde 3-phosphate: step 4/5. In terms of biological role, catalyzes the reversible conversion of 2-phosphoglycerate (2-PG) into phosphoenolpyruvate (PEP). It is essential for the degradation of carbohydrates via glycolysis. The protein is Enolase of Synechococcus sp. (strain JA-3-3Ab) (Cyanobacteria bacterium Yellowstone A-Prime).